The primary structure comprises 124 residues: Small ribosomal subunit protein bS6 (124 aa).

Residues 105–115 (EVQHEEARKSA) show a composition bias toward basic and acidic residues. The tract at residues 105–124 (EVQHEEARKSAQSDAPVAAA) is disordered.

The protein belongs to the bacterial ribosomal protein bS6 family.

Binds together with bS18 to 16S ribosomal RNA. This Polynucleobacter necessarius subsp. necessarius (strain STIR1) protein is Small ribosomal subunit protein bS6.